A 485-amino-acid polypeptide reads, in one-letter code: MTIQHTQDLAQIRAMVPEMRRVKSIHFIGIGGAGMSGIAEVLLNEGYQITGSDLSENPVTERLVSKGATVFIGHQASNVEKASVVVVSTAINEENPEVMAARELRIPIVRRAEMLAELMRFRHGIAVAGTHGKTTTTALVTQIYSEAGLDPTFVNGGLVKSAGTNARLGSSRILIAEADESDASFLHLQPMVSIVTNIEADHMDTYGGDFETLKQTFIDFLHNLPFYGQAIVCIDDPVIRELIPRISRQVITYGFSEDADVRIEDYHQEGQQGKFTVVREGRANLDITLNIPGRHNALNASAAIAVATEDDISDEAILKAMAGTQGTGRRFDHLGEFDTGNGHAMLVDDYGHHPTEVDVTIHAARSGWQDKRLVMIFQPHRYSRTRDLYDDFANVLEQVDVLIMLDVYAAGEKPIAGADGRALCRTIRSRGKVDPIFVPEIEQLPSVLANVIQDGDLILTQGAGDVGKVAKQLAALELNISKMLG.

ATP is bound at residue 129-135 (GTHGKTT).

Belongs to the MurCDEF family.

The protein localises to the cytoplasm. It catalyses the reaction UDP-N-acetyl-alpha-D-muramate + L-alanine + ATP = UDP-N-acetyl-alpha-D-muramoyl-L-alanine + ADP + phosphate + H(+). It participates in cell wall biogenesis; peptidoglycan biosynthesis. Functionally, cell wall formation. The protein is UDP-N-acetylmuramate--L-alanine ligase of Vibrio campbellii (strain ATCC BAA-1116).